The sequence spans 144 residues: Transcription antitermination protein NusB (144 aa).

Belongs to the NusB family.

Functionally, involved in transcription antitermination. Required for transcription of ribosomal RNA (rRNA) genes. Binds specifically to the boxA antiterminator sequence of the ribosomal RNA (rrn) operons. The sequence is that of Transcription antitermination protein NusB from Dictyoglomus turgidum (strain DSM 6724 / Z-1310).